The chain runs to 314 residues: Secreted frizzled-related protein 1 (314 aa).

The N-terminal stretch at 1–31 (MGIGRSEGGRRGAALGVLLALGAALLAVGSA) is a signal peptide. Residues 53–169 (TKPPQCVDIP…FPEGDVCIAM (117 aa)) enclose the FZ domain. Cystine bridges form between Cys-58–Cys-121, Cys-68–Cys-114, Cys-105–Cys-140, Cys-129–Cys-166, and Cys-133–Cys-157. An N-linked (GlcNAc...) asparagine glycan is attached at Asn-173. 3 cysteine pairs are disulfide-bonded: Cys-186–Cys-256, Cys-189–Cys-258, and Cys-203–Cys-306. The NTR domain maps to 186-306 (CPPCDNELKS…FMKKMKNHEC (121 aa)).

The protein belongs to the secreted frizzled-related protein (sFRP) family. As to quaternary structure, interacts with WNT1, WNT2 and FRZD6. Interacts with WNT4, WNT8 and MYOC. As to expression, widely expressed. Absent from lung, liver and peripheral blood leukocytes. Highest levels in heart and fetal kidney. Also expressed in testis, ovary, fetal brain and lung, leiomyomal cells, myometrial cells and vascular smooth muscle cells. Expressed in foreskin fibroblasts and in keratinocytes.

Its subcellular location is the secreted. Its function is as follows. Soluble frizzled-related proteins (sFRPS) function as modulators of Wnt signaling through direct interaction with Wnts. They have a role in regulating cell growth and differentiation in specific cell types. SFRP1 decreases intracellular beta-catenin levels. Has antiproliferative effects on vascular cells, in vitro and in vivo, and can induce, in vivo, an angiogenic response. In vascular cell cycle, delays the G1 phase and entry into the S phase. In kidney development, inhibits tubule formation and bud growth in metanephroi. Inhibits WNT1/WNT4-mediated TCF-dependent transcription. This Homo sapiens (Human) protein is Secreted frizzled-related protein 1 (SFRP1).